The chain runs to 401 residues: Secreted LysM effector Blys8 (401 aa).

A signal peptide spans 1 to 19 (MRTLAIFFIGAAVAAHVSP). The LysM 1 domain maps to 42–89 (TYYDEAYDKSYTCDDLLSAWVISKQDFESWNPAVGSDCKLVLGHSYCV). The span at 98-136 (STTTTTTTSTTTKTTTKTTTTTTAAPKPTSSAPSGPSPT) shows a compositional bias: low complexity. Positions 98 to 137 (STTTTTTTSTTTKTTTKTTTTTTAAPKPTSSAPSGPSPTQ) are disordered. The region spanning 146 to 193 (AYYFVKAGDTCDKISQMYGTFSTAQFIEWNPAVGSSCTGLWAGYYYCV) is the LysM 2 domain. The disordered stretch occupies residues 201 to 223 (SRTSTAGPTSTKPANGVTTPQPT). The 47-residue stretch at 233 to 279 (QFVYVQPGDQCGTVASRAGVSLSDFLQWNPSTGKDCSGLWANAYACV) folds into the LysM 3 domain.

This sequence belongs to the secreted LysM effector family.

Functionally, might have a role in sequestration of chitin oligosaccharides (breakdown products of fungal cell walls that are released during invasion and act as triggers of host immunity) to dampen host defense. This Beauveria bassiana (strain ARSEF 2860) (White muscardine disease fungus) protein is Secreted LysM effector Blys8.